Consider the following 459-residue polypeptide: Exodeoxyribonuclease 7 large subunit (459 aa).

The protein belongs to the XseA family. Heterooligomer composed of large and small subunits.

It localises to the cytoplasm. The catalysed reaction is Exonucleolytic cleavage in either 5'- to 3'- or 3'- to 5'-direction to yield nucleoside 5'-phosphates.. Its function is as follows. Bidirectionally degrades single-stranded DNA into large acid-insoluble oligonucleotides, which are then degraded further into small acid-soluble oligonucleotides. The polypeptide is Exodeoxyribonuclease 7 large subunit (Pseudomonas fluorescens (strain SBW25)).